The chain runs to 56 residues: Ovomucoid (56 aa).

Residues Val6–Cys56 enclose the Kazal-like domain. Intrachain disulfides connect Cys8/Cys38, Cys16/Cys35, and Cys24/Cys56. N-linked (GlcNAc...) asparagine glycosylation is present at Asn45.

Its subcellular location is the secreted. This chain is Ovomucoid, found in Callipepla squamata castanogastris (Chestnut bellied scaled quail).